The following is a 449-amino-acid chain: Glucose-6-phosphate isomerase (449 aa).

Residue E291 is the Proton donor of the active site. Residues H312 and K426 contribute to the active site.

This sequence belongs to the GPI family.

The protein resides in the cytoplasm. The catalysed reaction is alpha-D-glucose 6-phosphate = beta-D-fructose 6-phosphate. It functions in the pathway carbohydrate biosynthesis; gluconeogenesis. The protein operates within carbohydrate degradation; glycolysis; D-glyceraldehyde 3-phosphate and glycerone phosphate from D-glucose: step 2/4. Catalyzes the reversible isomerization of glucose-6-phosphate to fructose-6-phosphate. This Streptococcus pyogenes serotype M4 (strain MGAS10750) protein is Glucose-6-phosphate isomerase.